A 214-amino-acid chain; its full sequence is External core antigen (214 aa).

Residues 1–19 (MQLFHLCLIISCTCPTVQA) form the signal peptide. Residues 25 to 27 (GWL) form an HBEAG region. The disordered stretch occupies residues 165–214 (NAPILSTLPETTVVRRRDRGRSPRRRTPSPRRRRSQSPRRRRSQSRESQC). Residues 178–207 (VRRRDRGRSPRRRTPSPRRRRSQSPRRRRS) show a composition bias toward basic residues. The 1; half-length repeat unit spans residues 186–192 (SPRRRTP). Positions 186 to 208 (SPRRRTPSPRRRRSQSPRRRRSQ) are 3 X 8 AA repeats of S-P-R-R-R-R-S-Q. A propeptide spanning residues 186–214 (SPRRRTPSPRRRRSQSPRRRRSQSRESQC) is cleaved from the precursor. Tandem repeats lie at residues 193-200 (SPRRRRSQ) and 201-208 (SPRRRRSQ).

Belongs to the orthohepadnavirus precore antigen family. As to quaternary structure, homodimerizes. In terms of processing, phosphorylated. Cleaved by host furin.

It localises to the secreted. The protein resides in the host nucleus. In terms of biological role, may regulate immune response to the intracellular capsid in acting as a T-cell tolerogen, by having an immunoregulatory effect which prevents destruction of infected cells by cytotoxic T-cells. This immune regulation may predispose to chronicity during perinatal infections and prevent severe liver injury during adult infections. The polypeptide is External core antigen (Homo sapiens (Human)).